A 449-amino-acid chain; its full sequence is SWI/SNF chromatin-remodeling accessory subunit 2 (449 aa).

Residues 1 to 11 (MHSQQRPNPQM) show a composition bias toward polar residues. The disordered stretch occupies residues 1 to 56 (MHSQQRPNPQMNRHPYGTPGSAPQMRRPGGFAGQPPQMHGPRMVAPPAAPLPKKKK). The 78-residue stretch at 223–300 (NHPAKFKLHP…PNKLHQLLQQ (78 aa)) folds into the SWIB/MDM2 domain.

This sequence belongs to the SMARCD family. In terms of assembly, component of the multiprotein chromatin-remodeling complexes SWI/SNF: SWI/SNF-A (BAF), SWI/SNF-B (PBAF) and related complexes. The canonical complex contains a catalytic subunit swsn-4, core subunits swsn-1 and swsn-5, and accessory subunits swsn-3, swsn-6, phf-10, dpff-1, swsn-9 and either ham-3/swsn-2.1 or swsn-2.2.

The protein resides in the nucleus. It localises to the nucleoplasm. The protein localises to the chromosome. It is found in the nucleus envelope. In terms of biological role, involved in transcriptional activation and repression of select genes by chromatin remodeling (alteration of DNA-nucleosome topology). Component of SWI/SNF chromatin remodeling complexes that carry out key enzymatic activities, changing chromatin structure by altering DNA-histone contacts within a nucleosome in an ATP-dependent manner. Probably regulates vulva development through the let-60/Ras pathway. Involved in nuclear reassembly after mitosis and recruitment of nuclear envelope protein, mel-28, to the nuclear periphery in the early embryo and in the adult germline. Involved in gonadogenesis. The polypeptide is SWI/SNF chromatin-remodeling accessory subunit 2 (Caenorhabditis elegans).